Reading from the N-terminus, the 396-residue chain is 8-amino-7-oxononanoate synthase (396 aa).

Residue Arg-21 participates in substrate binding. Residue 108 to 109 (GY) participates in pyridoxal 5'-phosphate binding. Position 133 (His-133) interacts with substrate. Pyridoxal 5'-phosphate is bound by residues Ser-179, His-207, and Thr-236. At Lys-239 the chain carries N6-(pyridoxal phosphate)lysine. Thr-353 serves as a coordination point for substrate.

It belongs to the class-II pyridoxal-phosphate-dependent aminotransferase family. BioF subfamily. As to quaternary structure, homodimer. Pyridoxal 5'-phosphate serves as cofactor.

The enzyme catalyses 6-carboxyhexanoyl-[ACP] + L-alanine + H(+) = (8S)-8-amino-7-oxononanoate + holo-[ACP] + CO2. Its pathway is cofactor biosynthesis; biotin biosynthesis. In terms of biological role, catalyzes the decarboxylative condensation of pimeloyl-[acyl-carrier protein] and L-alanine to produce 8-amino-7-oxononanoate (AON), [acyl-carrier protein], and carbon dioxide. In Hahella chejuensis (strain KCTC 2396), this protein is 8-amino-7-oxononanoate synthase.